An 848-amino-acid polypeptide reads, in one-letter code: Xylosyltransferase (848 aa).

Topologically, residues 1-14 (MSLHRTLRRFLRKW) are cytoplasmic. Residues 15-35 (KALVYAVSFILLIQAFFTFQS) traverse the membrane as a helical; Signal-anchor for type II membrane protein segment. At 36 to 843 (SPNLMEEEHL…PKTELISVKP (808 aa)) the chain is on the lumenal side. 4 disulfides stabilise this stretch: cysteine 145–cysteine 173, cysteine 189–cysteine 427, cysteine 446–cysteine 459, and cysteine 448–cysteine 457. Residues valine 219, aspartate 247, and 276–278 (TIW) contribute to the UDP-alpha-D-xylose site. An N-linked (GlcNAc...) asparagine glycan is attached at asparagine 306. 379 to 380 (DW) is a binding site for UDP-alpha-D-xylose. UDP-alpha-D-xylose contacts are provided by residues serine 460 and 482 to 483 (RK). Disulfide bonds link cysteine 529-cysteine 811 and cysteine 794-cysteine 822. Asparagine 530 is a glycosylation site (N-linked (GlcNAc...) asparagine). The disordered stretch occupies residues 824-848 (NTNWSSLSPDPKTELISVKPDGRIR). Asparagine 826 carries N-linked (GlcNAc...) asparagine glycosylation.

This sequence belongs to the glycosyltransferase 14 family. XylT subfamily. Requires a divalent metal cation as cofactor.

The protein localises to the endoplasmic reticulum membrane. It localises to the golgi apparatus membrane. It carries out the reaction UDP-alpha-D-xylose + L-seryl-[protein] = 3-O-(beta-D-xylosyl)-L-seryl-[protein] + UDP + H(+). It functions in the pathway glycan metabolism; chondroitin sulfate biosynthesis. It participates in glycan metabolism; heparan sulfate biosynthesis. In terms of biological role, catalyzes the first step in biosynthesis of glycosaminoglycan. Transfers D-xylose from UDP-D-xylose to specific serine residues of the core protein. Initial enzyme in the biosynthesis of chondroitin sulfate and dermatan sulfate proteoglycans in fibroblasts and chondrocytes. The sequence is that of Xylosyltransferase (xt) from Ciona intestinalis (Transparent sea squirt).